The following is a 398-amino-acid chain: E3 ubiquitin-protein ligase ATL6 (398 aa).

A signal peptide spans 1–29 (MRSSDHMAFAGVLPIVFLLILSSADLAAS). Residues 50 to 70 (AVIVVILIAALFFMGFFSIYF) traverse the membrane as a helical segment. The RING-type; atypical zinc finger occupies 128–170 (CAICLNEFEDDETLRLLPKCDHVFHPHCIDAWLEAHVTCPVCR). At S278 the chain carries Phosphoserine. The disordered stretch occupies residues 368-398 (PRGGVNKDGEGTSVKSTGASGSTSGSVRLPV). Low complexity predominate over residues 378–398 (GTSVKSTGASGSTSGSVRLPV).

It belongs to the RING-type zinc finger family. ATL subfamily.

The protein localises to the membrane. The catalysed reaction is S-ubiquitinyl-[E2 ubiquitin-conjugating enzyme]-L-cysteine + [acceptor protein]-L-lysine = [E2 ubiquitin-conjugating enzyme]-L-cysteine + N(6)-ubiquitinyl-[acceptor protein]-L-lysine.. Its pathway is protein modification; protein ubiquitination. Functionally, E3 ubiquitin-protein ligase able to catalyze polyubiquitination with ubiquitin-conjugating enzyme E2 UBC8 in vitro. May be involved in the plant C/N response and the early steps of the plant defense signaling pathway. This chain is E3 ubiquitin-protein ligase ATL6 (ATL6), found in Arabidopsis thaliana (Mouse-ear cress).